The following is a 324-amino-acid chain: Tubulin alpha-8 chain (324 aa).

The GTP site is built by S15, G19, T20, T54, N81, and N103. E129 is a catalytic residue.

This sequence belongs to the tubulin family. In terms of assembly, dimer of alpha and beta chains. A typical microtubule is a hollow water-filled tube with an outer diameter of 25 nm and an inner diameter of 15 nM. Alpha-beta heterodimers associate head-to-tail to form protofilaments running lengthwise along the microtubule wall with the beta-tubulin subunit facing the microtubule plus end conferring a structural polarity. Microtubules usually have 13 protofilaments but different protofilament numbers can be found in some organisms and specialized cells. Mg(2+) serves as cofactor. Post-translationally, some glutamate residues at the C-terminus are polyglycylated, resulting in polyglycine chains on the gamma-carboxyl group. Glycylation is mainly limited to tubulin incorporated into axonemes (cilia and flagella) whereas glutamylation is prevalent in neuronal cells, centrioles, axonemes, and the mitotic spindle. Both modifications can coexist on the same protein on adjacent residues, and lowering polyglycylation levels increases polyglutamylation, and reciprocally. The precise function of polyglycylation is still unclear. Some glutamate residues at the C-terminus are polyglutamylated, resulting in polyglutamate chains on the gamma-carboxyl group. Polyglutamylation plays a key role in microtubule severing by spastin (SPAST). SPAST preferentially recognizes and acts on microtubules decorated with short polyglutamate tails: severing activity by SPAST increases as the number of glutamates per tubulin rises from one to eight, but decreases beyond this glutamylation threshold.

It localises to the cytoplasm. Its subcellular location is the cytoskeleton. The enzyme catalyses GTP + H2O = GDP + phosphate + H(+). Tubulin is the major constituent of microtubules, a cylinder consisting of laterally associated linear protofilaments composed of alpha- and beta-tubulin heterodimers. Microtubules grow by the addition of GTP-tubulin dimers to the microtubule end, where a stabilizing cap forms. Below the cap, tubulin dimers are in GDP-bound state, owing to GTPase activity of alpha-tubulin. This chain is Tubulin alpha-8 chain, found in Gallus gallus (Chicken).